The chain runs to 333 residues: G-protein coupled receptor 146 (333 aa).

The Extracellular segment spans residues 1–21 (MWSCEDLNYTNSGEEQYLCNE). Asn8 is a glycosylation site (N-linked (GlcNAc...) asparagine). The helical transmembrane segment at 22 to 42 (FHLFLFIFSVLYLIICFPVGL) threads the bilayer. Over 43 to 65 (CYNVQLVLVNLYNKATMTMPDVY) the chain is Cytoplasmic. A helical transmembrane segment spans residues 66–86 (FVNMAIAGLIINAVAPVYLFG). At 87-102 (PAYTKWSLWSFGNEVY) the chain is on the extracellular side. A helical transmembrane segment spans residues 103-123 (ITLLILFNVSSLVIMYSTTLL). Topologically, residues 124-146 (SLDYYIECALPRTYMSSVYNTKH) are cytoplasmic. Residues 147 to 167 (VCGFIWGGAVLTSFSSLLFYI) form a helical membrane-spanning segment. Residues 168–189 (CNHVSTKIIECSKMQNREAADA) are Extracellular-facing. The chain crosses the membrane as a helical span at residues 190-210 (IMVLIGYVVPIIAVIYALVLI). The Cytoplasmic portion of the chain corresponds to 211-234 (LQIRKEATPLDQESGRLDPSVHRL). The chain crosses the membrane as a helical span at residues 235–255 (LIATVCTQFILWTPYYVTLLV). Residues 256-275 (NTFMDARVKSSNTFYIRIFQ) are Extracellular-facing. A helical transmembrane segment spans residues 276–296 (FTEGLSNFLAFSSSFVLPLIH). At 297 to 333 (RHINKNFSGKLQRLLKRLHCGSQGCTHEHTVVQQVMT) the chain is on the cytoplasmic side.

This sequence belongs to the G-protein coupled receptor 1 family.

It is found in the cell membrane. G-protein coupled receptor required for the regulation of plasma cholesterol levels. This chain is G-protein coupled receptor 146 (gpr146), found in Xenopus laevis (African clawed frog).